The primary structure comprises 1111 residues: MVVSAGPWSSEKAEMNILEINEKLRPQLAENKQQFGNLKERCFLTQLAGFLANRQKKYKYEECKDLIKFMLRNERQFKEEKLAEQLKQAEELRQYKVLVHSQERELTQLKEKLREGRDASRSLNEHLQALLTPDEPDKSQGQDLQEQLAEGCRLAQHLVQKLSPENDEDEDEDVQVEEDEKVLESSAPREVQKAEESKVAEDSLEECAITCSNSHGPCDSNQPHKNIKITFEEDEVNSTLVVDRESSHDECQDALNILPVPGPTSSATNVSMVVSAGPLSSEKAEMNILEINEKLRPQLAEKKQQFRNLKEKCFLTQLAGFLANQQNKYKYEECKDLIKFMLRNERQFKEEKLAEQLKQAEELRQYKVLVHAQERELTQLREKLREGRDASRSLNEHLQALLTPDEPDKSQGQDLQEQLAEGCRLAQHLVQKLSPENDNDDDEDVQIEVAEKVQKSSAPREMQKAEEKEVPEDSLEECAITYSNSHGPYDSNQPHRKTKITFEEDKVDSTLIGSSSHVEREDAVHIIPENESDDEEEEEKGPVSPRNLQESEEEEVPQESWDEGYSTPSIPPEMLASYKSYSSTFHSLEEQQVCMAVDIGRHRWDQVKKEDQEATGPRLSRELLDEKGPEVLQDSLDRCYSTPSGCLELTDSCQPYRSAFYVLEQQRVGLAVDMDEIEKYQEVEEDQDPSCPRLSRELLDEKEPEVLQDSLGRWYSTPSGYLELPDLGQPYSSAVYSLEEQYLGLALDLDRIKKDQEEEEDQGPPCPRLSRELLEVVEPEVLQDSLDRCYSTPSSCLEQPDSCQPYGSSFYALEEKHVGFSLDVGEIEKKGKGKKRRGRRSKKKRRRGRKEGEENQNPPCPRLSRELLDEKEPEVLQDSLDRCYSTPSGYLELPDLGQPYSSAVYSLEEQYLGLALDVDRIKKDQEEEEDQGPPCPRLSRELLEVVEPEVLQDSLDRCYSTPSSCLEQPDSCQPYGSSFYALEEKHVGFSLDVGEIEKKGKGKKRRGRRSKKERRRGRKEGEEDQNPPCPRLNGVLMEVEEPEVLQDSLDGCYSTPSMYFELPDSFQHYRSVFYSFEEQHISFALYVDNRFFTLTVTSLHLVFQMEVIFPQ.

Positions Met-70–Leu-130 form a coiled coil. Residues Lys-161 to Lys-198 form a disordered region. Over residues Glu-165–Lys-181 the composition is skewed to acidic residues. Positions Glu-165–Pro-259 constitute an Olduvai 1 domain. Positions Met-341–Leu-401 form a coiled coil. Olduvai domains follow at residues Glu-436–Pro-528, Glu-529–Gly-600, Arg-601–Pro-692, Ser-695–Asp-750, Arg-751–Lys-843, Lys-844–Asp-919, Arg-920–Lys-1012, and Glu-1013–Gln-1111. Disordered stretches follow at residues Glu-451–Ser-474 and Thr-510–Ser-569. Composition is skewed to acidic residues over residues Asn-530–Glu-539 and Glu-550–Asp-562. 2 disordered regions span residues Lys-829–Lys-871 and Lys-999–Asn-1033. 2 stretches are compositionally biased toward basic residues: residues Gly-831 to Arg-849 and Gly-1000 to Arg-1018.

Belongs to the NBPF family. As to expression, expressed in a neuroblastoma cell line.

Its subcellular location is the cytoplasm. This chain is NBPF family member NBPF9, found in Homo sapiens (Human).